Reading from the N-terminus, the 537-residue chain is Chaperonin GroEL (537 aa).

ATP is bound by residues 30–33, 87–91, Gly-414, 477–479, and Asp-493; these read TLGP, DGTTT, and DAV.

Belongs to the chaperonin (HSP60) family. In terms of assembly, forms a cylinder of 14 subunits composed of two heptameric rings stacked back-to-back. Interacts with the co-chaperonin GroES.

The protein localises to the cytoplasm. It carries out the reaction ATP + H2O + a folded polypeptide = ADP + phosphate + an unfolded polypeptide.. Its function is as follows. Together with its co-chaperonin GroES, plays an essential role in assisting protein folding. The GroEL-GroES system forms a nano-cage that allows encapsulation of the non-native substrate proteins and provides a physical environment optimized to promote and accelerate protein folding. The protein is Chaperonin GroEL of Coprothermobacter proteolyticus (strain ATCC 35245 / DSM 5265 / OCM 4 / BT).